The chain runs to 132 residues: NAD(P) transhydrogenase subunit alpha part 2 (132 aa).

A run of 3 helical transmembrane segments spans residues 43 to 63 (PLVFAITIFVLASFVGYYVVW), 72 to 92 (PLMSITNAISGIIVISSMIAI), and 103 to 123 (LLGSFATLLASINIFGGFIVT).

As to quaternary structure, complex of an alpha and a beta chain; in Rickettsia, the alpha chain seems to be made of two subunits.

The protein resides in the cell inner membrane. It carries out the reaction NAD(+) + NADPH + H(+)(in) = NADH + NADP(+) + H(+)(out). In terms of biological role, the transhydrogenation between NADH and NADP is coupled to respiration and ATP hydrolysis and functions as a proton pump across the membrane. The sequence is that of NAD(P) transhydrogenase subunit alpha part 2 (pntAB) from Rickettsia prowazekii (strain Madrid E).